The chain runs to 390 residues: Putative cyclin-F2-1 (390 aa).

The tract at residues 135-154 is disordered; the sequence is YNGDDDAPAPDDSMASRPQL.

The protein belongs to the cyclin family. Cyclin F subfamily.

This chain is Putative cyclin-F2-1 (CycF2-1), found in Oryza sativa subsp. japonica (Rice).